A 314-amino-acid chain; its full sequence is Methenyltetrahydromethanopterin cyclohydrolase (314 aa).

This sequence belongs to the MCH family.

The protein resides in the cytoplasm. It catalyses the reaction 5,10-methenyl-5,6,7,8-tetrahydromethanopterin + H2O = N(5)-formyl-5,6,7,8-tetrahydromethanopterin + H(+). It functions in the pathway one-carbon metabolism; methanogenesis from CO(2); 5,10-methenyl-5,6,7,8-tetrahydromethanopterin from CO(2): step 3/3. Its function is as follows. Catalyzes the reversible interconversion of 5-formyl-H(4)MPT to methenyl-H(4)MPT(+). The polypeptide is Methenyltetrahydromethanopterin cyclohydrolase (Methanocorpusculum labreanum (strain ATCC 43576 / DSM 4855 / Z)).